We begin with the raw amino-acid sequence, 684 residues long: Putative glucan endo-1,3-beta-glucosidase btgC (684 aa).

Positions methionine 1 to tyrosine 10 are enriched in polar residues. 3 disordered regions span residues methionine 1–threonine 38, alanine 124–aspartate 143, and aspartate 157–serine 182. Topologically, residues methionine 1–arginine 302 are cytoplasmic. The segment covering arginine 12–glutamate 32 has biased composition (basic and acidic residues). The helical; Signal-anchor for type II membrane protein transmembrane segment at glycine 303 to valine 323 threads the bilayer. The Extracellular portion of the chain corresponds to glycine 324–threonine 684. The disordered stretch occupies residues glutamine 330–glycine 358. The span at threonine 336–glycine 347 shows a compositional bias: low complexity. 4 N-linked (GlcNAc...) asparagine glycosylation sites follow: asparagine 404, asparagine 427, asparagine 455, and asparagine 474. Glutamate 487 acts as the Proton donor in catalysis. Glutamate 586 (nucleophile) is an active-site residue. N-linked (GlcNAc...) asparagine glycosylation occurs at asparagine 631.

It belongs to the glycosyl hydrolase 17 family.

The protein resides in the cell membrane. The catalysed reaction is Hydrolysis of (1-&gt;3)-beta-D-glucosidic linkages in (1-&gt;3)-beta-D-glucans.. Its function is as follows. Glucanases play a role in cell expansion during growth, in cell-cell fusion during mating, and in spore release during sporulation. This enzyme may be involved in beta-glucan degradation. Active on laminarin and lichenan. This Aspergillus niger (strain ATCC MYA-4892 / CBS 513.88 / FGSC A1513) protein is Putative glucan endo-1,3-beta-glucosidase btgC (btgC).